The chain runs to 101 residues: UPF0235 protein Mevan_0378 (101 aa).

The protein belongs to the UPF0235 family.

This is UPF0235 protein Mevan_0378 from Methanococcus vannielii (strain ATCC 35089 / DSM 1224 / JCM 13029 / OCM 148 / SB).